Reading from the N-terminus, the 196-residue chain is Adenylate kinase (196 aa).

Residue 9–17 (GIPGVGKST) participates in ATP binding.

This sequence belongs to the archaeal adenylate kinase family.

Its subcellular location is the cytoplasm. The enzyme catalyses AMP + ATP = 2 ADP. This is Adenylate kinase from Thermococcus onnurineus (strain NA1).